The sequence spans 189 residues: NADH-quinone oxidoreductase subunit B (189 aa).

[4Fe-4S] cluster-binding residues include Cys39, Cys40, Cys104, and Cys135.

The protein belongs to the complex I 20 kDa subunit family. In terms of assembly, NDH-1 is composed of 14 different subunits. Subunits NuoB, C, D, E, F, and G constitute the peripheral sector of the complex. Requires [4Fe-4S] cluster as cofactor.

It is found in the cell inner membrane. The catalysed reaction is a quinone + NADH + 5 H(+)(in) = a quinol + NAD(+) + 4 H(+)(out). Functionally, NDH-1 shuttles electrons from NADH, via FMN and iron-sulfur (Fe-S) centers, to quinones in the respiratory chain. The immediate electron acceptor for the enzyme in this species is believed to be a menaquinone. Couples the redox reaction to proton translocation (for every two electrons transferred, four hydrogen ions are translocated across the cytoplasmic membrane), and thus conserves the redox energy in a proton gradient. This chain is NADH-quinone oxidoreductase subunit B, found in Chlorobaculum parvum (strain DSM 263 / NCIMB 8327) (Chlorobium vibrioforme subsp. thiosulfatophilum).